Here is a 189-residue protein sequence, read N- to C-terminus: MADEQQQTLDPQAPEQTDAPEAAKDLTARVQELEEQLAAAQDQSLRLVADLQNVRRRAEQDVEKAHKFALEKFAGDLLAVVDTLERGLQMSNPDDEAIRPMREGMELTLKMFDDTLRRYQVEAINPEGEPFNPEQHQAMVMEESATAEPGSVLKVFQKGYLISGRLLRPAMVVVSKAPSETPPSIDEQA.

The span at 1-10 (MADEQQQTLD) shows a compositional bias: polar residues. Positions 1–21 (MADEQQQTLDPQAPEQTDAPE) are disordered.

The protein belongs to the GrpE family. Homodimer.

It localises to the cytoplasm. In terms of biological role, participates actively in the response to hyperosmotic and heat shock by preventing the aggregation of stress-denatured proteins, in association with DnaK and GrpE. It is the nucleotide exchange factor for DnaK and may function as a thermosensor. Unfolded proteins bind initially to DnaJ; upon interaction with the DnaJ-bound protein, DnaK hydrolyzes its bound ATP, resulting in the formation of a stable complex. GrpE releases ADP from DnaK; ATP binding to DnaK triggers the release of the substrate protein, thus completing the reaction cycle. Several rounds of ATP-dependent interactions between DnaJ, DnaK and GrpE are required for fully efficient folding. The polypeptide is Protein GrpE (Pseudomonas paraeruginosa (strain DSM 24068 / PA7) (Pseudomonas aeruginosa (strain PA7))).